The following is a 246-amino-acid chain: 1-(5-phosphoribosyl)-5-[(5-phosphoribosylamino)methylideneamino] imidazole-4-carboxamide isomerase (246 aa).

Residue D10 is the Proton acceptor of the active site. The active-site Proton donor is the D131.

The protein belongs to the HisA/HisF family.

It is found in the cytoplasm. It carries out the reaction 1-(5-phospho-beta-D-ribosyl)-5-[(5-phospho-beta-D-ribosylamino)methylideneamino]imidazole-4-carboxamide = 5-[(5-phospho-1-deoxy-D-ribulos-1-ylimino)methylamino]-1-(5-phospho-beta-D-ribosyl)imidazole-4-carboxamide. Its pathway is amino-acid biosynthesis; L-histidine biosynthesis; L-histidine from 5-phospho-alpha-D-ribose 1-diphosphate: step 4/9. This is 1-(5-phosphoribosyl)-5-[(5-phosphoribosylamino)methylideneamino] imidazole-4-carboxamide isomerase from Acidiphilium cryptum (strain JF-5).